We begin with the raw amino-acid sequence, 476 residues long: Fatty acid hydroperoxide lyase, chloroplastic (476 aa).

Residues 280 to 300 form a helical membrane-spanning segment; it reads LLFILGFNAFGGFSIFLPTLL. C438 contributes to the heme binding site.

This sequence belongs to the cytochrome P450 family. Heme is required as a cofactor. Highly expressed in developing flowers and in young leaves. Detected in stems and immature green fruits, but not in mature green and red fruits.

Its subcellular location is the plastid. It localises to the chloroplast outer membrane. Its activity is regulated as follows. Reversibly inhibited by nordihydroguaiaretic acid (NDGA) and irreversibly by salicylic acid. In terms of biological role, cytochrome P450 of the CYP74B subfamily involved in the biosynthesis of traumatin and C6 aldehydes. Metabolizes 13- but not 9-hydroperoxides of linoleic and linolenic acids. Can use 15S-hydroperoxy-11(Z),13(E),17(Z)-eicosatrienoic acid (15-HPET) and 13S-hydroperoxy-9(Z),11(E),15(Z)-octadecatrienoic acid (13-HPOT) as substrates, but only 5% activity with 13S-hydroperoxy-9(Z),11(E)-octadecadienoic acid (13-HPOD). Produces n-hexanal and 12-oxo-9(Z)-dodecanoic acid from 13-HPOD. The polypeptide is Fatty acid hydroperoxide lyase, chloroplastic (Solanum lycopersicum (Tomato)).